The following is a 430-amino-acid chain: Trigger factor (430 aa).

The 86-residue stretch at 157 to 242 (GDLVALETWS…AVEVSEPVLP (86 aa)) folds into the PPIase FKBP-type domain.

This sequence belongs to the FKBP-type PPIase family. Tig subfamily.

The protein resides in the cytoplasm. It catalyses the reaction [protein]-peptidylproline (omega=180) = [protein]-peptidylproline (omega=0). In terms of biological role, involved in protein export. Acts as a chaperone by maintaining the newly synthesized protein in an open conformation. Functions as a peptidyl-prolyl cis-trans isomerase. This Xanthomonas euvesicatoria pv. vesicatoria (strain 85-10) (Xanthomonas campestris pv. vesicatoria) protein is Trigger factor.